Consider the following 320-residue polypeptide: MEHFLKSIFDISKNVLPIILFIELIIGIIGNGFMALVHCMDWVKRKKMSLVNQILTTLATSRICLLWFMLLGLLITLLDPDLASARMMIQVASNLWIIANHMSIWLATCLTVFYFLKIANFSSSLFLYLKWRVEKVISVIFLVSLVLLFLNMLLMNLENDMCIAEYHQINISYSFIYHYRADCERRVLRLHIIILSVPFVLSLPTFLLLIFSLWTHHKKMQQHVQGRRDASTTAHFKALQTVIAFLLLYCIFILSMLLQFWKYELMKKPLFILFCHIVYGAFPSFHSYVLILGDMKLRQASLSVLLWLKCRPNYIETLDL.

Topologically, residues 1 to 14 are extracellular; sequence MEHFLKSIFDISKN. Residues 15–35 traverse the membrane as a helical segment; it reads VLPIILFIELIIGIIGNGFMA. At 36–62 the chain is on the cytoplasmic side; it reads LVHCMDWVKRKKMSLVNQILTTLATSR. A helical transmembrane segment spans residues 63–83; that stretch reads ICLLWFMLLGLLITLLDPDLA. Topologically, residues 84-94 are extracellular; it reads SARMMIQVASN. The helical transmembrane segment at 95–115 threads the bilayer; sequence LWIIANHMSIWLATCLTVFYF. At 116 to 135 the chain is on the cytoplasmic side; it reads LKIANFSSSLFLYLKWRVEK. The chain crosses the membrane as a helical span at residues 136–156; sequence VISVIFLVSLVLLFLNMLLMN. The Extracellular portion of the chain corresponds to 157–191; the sequence is LENDMCIAEYHQINISYSFIYHYRADCERRVLRLH. Asn170 carries an N-linked (GlcNAc...) asparagine glycan. The chain crosses the membrane as a helical span at residues 192-212; it reads IIILSVPFVLSLPTFLLLIFS. Residues 213-240 are Cytoplasmic-facing; the sequence is LWTHHKKMQQHVQGRRDASTTAHFKALQ. The chain crosses the membrane as a helical span at residues 241-261; that stretch reads TVIAFLLLYCIFILSMLLQFW. At 262 to 270 the chain is on the extracellular side; that stretch reads KYELMKKPL. Residues 271–291 traverse the membrane as a helical segment; it reads FILFCHIVYGAFPSFHSYVLI. The Cytoplasmic segment spans residues 292–320; the sequence is LGDMKLRQASLSVLLWLKCRPNYIETLDL.

Belongs to the G-protein coupled receptor T2R family.

The protein resides in the membrane. In terms of biological role, putative taste receptor which may play a role in the perception of bitterness. The protein is Taste receptor type 2 member 109 of Rattus norvegicus (Rat).